The chain runs to 1250 residues: Immunoglobulin superfamily DCC subclass member 4 (1250 aa).

An N-terminal signal peptide occupies residues 1 to 24 (MARGDAGRGRGLLALTFCLLAARG). The Extracellular portion of the chain corresponds to 25–957 (ELLLPQETTV…SDSLDMHSVT (933 aa)). 4 consecutive Ig-like C2-type domains span residues 29–137 (PQET…TAVV), 143–229 (ADFS…ALLS), 242–330 (QDVV…AELR), and 335–421 (PAIT…ASLA). Cys-57 and Cys-121 are disulfide-bonded. N-linked (GlcNAc...) asparagine glycosylation is found at Asn-90, Asn-102, and Asn-157. An intrachain disulfide couples Cys-164 to Cys-212. Asn-252 is a glycosylation site (N-linked (GlcNAc...) asparagine). Disulfide bonds link Cys-265–Cys-312 and Cys-356–Cys-405. Fibronectin type-III domains are found at residues 431–525 (APTR…TLDD), 527–623 (PSAA…TPSM), 632–741 (APAE…APAP), 752–845 (PPAH…TLPD), and 850–945 (PPSD…TLQE). Asn-582 carries N-linked (GlcNAc...) asparagine glycosylation. Residues 958-978 (GIIVGVCLGLLCLLACMCAGL) traverse the membrane as a helical segment. Residues 979 to 1250 (RRSPHRESLP…LPRSPVSSSA (272 aa)) lie on the Cytoplasmic side of the membrane. The residue at position 995 (Thr-995) is a Phosphothreonine. Disordered regions lie at residues 1140–1175 (SASNGNPDLHLQDLEPEDPLPPEAPDLISGVGDPGQ) and 1215–1250 (PGEVLEETPGDSCQLKSPCPLGASPGLPRSPVSSSA).

This sequence belongs to the immunoglobulin superfamily. DCC family.

The protein localises to the cell membrane. In Homo sapiens (Human), this protein is Immunoglobulin superfamily DCC subclass member 4 (IGDCC4).